Here is a 1396-residue protein sequence, read N- to C-terminus: Melanoma inhibitory activity protein 2 (1396 aa).

An N-terminal signal peptide occupies residues 1-22; sequence MAEVSVQRILLLVVSLAKCLEG. Over 23–604 the chain is Lumenal; sequence TKLLAHLKKC…YGFMSSALSP (582 aa). The SH3 domain maps to 39–101; it reads TLISRVLALR…PRDAVEIEEV (63 aa). Asn-59 carries an N-linked (GlcNAc...) asparagine glycan. Disordered regions lie at residues 197-288 and 331-361; these read EGAG…VPDE and ESNPPLQDIPSSVPPDEEVPAPCREISTDKE. Residues 243-258 are compositionally biased toward acidic residues; that stretch reads SDTEPTQELALEEESD. N-linked (GlcNAc...) asparagine glycosylation is present at Asn-366. Disordered regions lie at residues 396 to 421 and 525 to 557; these read DKGENEDGEVDNLKHPIGSDFDPEKE and PMEEHEGVHFKPSSSKRNEDDSNSWADPEELSV. The stretch at 605–625 is an intramembrane region; the sequence is IEILLESVVAALPEDMRADFN. Over 626 to 628 the chain is Lumenal; the sequence is PSG. A helical transmembrane segment spans residues 629 to 649; the sequence is FSLELAVCVLSVGLLAVVLFL. At 650 to 1396 the chain is on the cytoplasmic side; the sequence is WRGFRSIRSR…AADPPETQEA (747 aa). A mediates interaction with MIA3 region spans residues 651–1243; that stretch reads RGFRSIRSRF…RSYNMPSLDK (593 aa). 2 coiled-coil regions span residues 693-867 and 914-1082; these read YEGL…LVTS and AAKL…NRQK. The disordered stretch occupies residues 1103–1396; the sequence is PNTAFGREHS…AADPPETQEA (294 aa). The interval 1105–1396 is proline-rich domain (PRD); probably mediates interaction with COPII coat subunits; it reads TAFGREHSPY…AADPPETQEA (292 aa). A compositionally biased stretch (low complexity) spans 1135–1146; that stretch reads LLEGPLRLSPLL. Basic and acidic residues predominate over residues 1165-1179; that stretch reads MNTERGESSYDRLSD. The span at 1252–1269 shows a compositional bias: polar residues; sequence MESSGNGTKDNLGNSNVP. Composition is skewed to pro residues over residues 1331-1342 and 1351-1368; these read RDFPGPPLPPFP and GFPPYLPPRAGFFPPPPH.

It belongs to the MIA/OTOR family. Interacts with MIA3. Interacts with the COPII coat subunits SEC23A, SEC23B and maybe SEC24C. Interacts with PREB; recruits PREB to endoplasmic reticulum exit sites. Interacts with APOB. Isoform 1 is expressed in liver (at protein level). Isoform 2 is highly expressed in liver and weakly in testis.

The protein localises to the endoplasmic reticulum membrane. Functionally, plays a role in the transport of cargos that are too large to fit into COPII-coated vesicles and require specific mechanisms to be incorporated into membrane-bound carriers and exported from the endoplasmic reticulum. Plays a role in the secretion of lipoproteins, pre-chylomicrons and pre-VLDLs, by participating in their export from the endoplasmic reticulum. Thereby, may play a role in cholesterol and triglyceride homeostasis. Required for collagen VII (COL7A1) secretion by loading COL7A1 into transport carriers and recruiting PREB/SEC12 at the endoplasmic reticulum exit sites. The protein is Melanoma inhibitory activity protein 2 of Mus musculus (Mouse).